We begin with the raw amino-acid sequence, 245 residues long: Cytochrome P450 CYP82H23 (245 aa).

This sequence belongs to the cytochrome P450 family. Heme is required as a cofactor.

Functionally, probable heme-thiolate monooxygenase. The sequence is that of Cytochrome P450 CYP82H23 from Panax ginseng (Korean ginseng).